Consider the following 1123-residue polypeptide: Ubiquitin carboxyl-terminal hydrolase 43 (1123 aa).

Residues 1–102 (MDLGPGDAAG…DGARPPGAQG (102 aa)) form a disordered region. Residues 17-28 (RPRRRRSLRRLF) show a composition bias toward basic residues. Residues 29 to 39 (SRFLLALGSRS) show a composition bias toward low complexity. The USP domain occupies 101–710 (QGLKNHGNTC…GAYILFYQKR (610 aa)). Catalysis depends on Cys-110, which acts as the Nucleophile. The segment at 202–221 (EGSSRGPVSEKLPPEATKTS) is disordered. Catalysis depends on His-668, which acts as the Proton acceptor. Arg-746 carries the post-translational modification Asymmetric dimethylarginine. Disordered regions lie at residues 795-826 (ISMK…EKPP), 854-886 (TGTA…IERG), 959-1049 (FQMG…RIPE), and 1068-1099 (SSLR…QASY). Position 969 is a phosphoserine (Ser-969). Residues 979-990 (KDSRRGTSELDR) are compositionally biased toward basic and acidic residues. Positions 1016 to 1027 (VSPQVPPVSLVS) are enriched in low complexity. At Ser-1041 the chain carries Phosphoserine.

The protein belongs to the peptidase C19 family. As to expression, expressed in brain, aorta and lung at low levels.

The catalysed reaction is Thiol-dependent hydrolysis of ester, thioester, amide, peptide and isopeptide bonds formed by the C-terminal Gly of ubiquitin (a 76-residue protein attached to proteins as an intracellular targeting signal).. May recognize and hydrolyze the peptide bond at the C-terminal Gly of ubiquitin. Involved in the processing of poly-ubiquitin precursors as well as that of ubiquitinated proteins. This is Ubiquitin carboxyl-terminal hydrolase 43 (USP43) from Homo sapiens (Human).